A 179-amino-acid polypeptide reads, in one-letter code: MAKLHDKYQETVVAELTQKFGYTSVMQVPRIEKITLNMGVGEAVADKKVMEHAVRDMTAIAGQKPVVTVARKSVAGFKIREGYPIGCKVTLRGERMWEFLERLVDIAIPRIRDFRGLSAKAFDGRGNYAMGVREQIIFPEIDYDKIDKIRGMDIVITTSAKTDEEGRALLDAFNFPFKK.

Belongs to the universal ribosomal protein uL5 family. Part of the 50S ribosomal subunit; part of the 5S rRNA/L5/L18/L25 subcomplex. Contacts the 5S rRNA and the P site tRNA. Forms a bridge to the 30S subunit in the 70S ribosome.

In terms of biological role, this is one of the proteins that bind and probably mediate the attachment of the 5S RNA into the large ribosomal subunit, where it forms part of the central protuberance. In the 70S ribosome it contacts protein S13 of the 30S subunit (bridge B1b), connecting the 2 subunits; this bridge is implicated in subunit movement. Contacts the P site tRNA; the 5S rRNA and some of its associated proteins might help stabilize positioning of ribosome-bound tRNAs. The polypeptide is Large ribosomal subunit protein uL5 (Shewanella oneidensis (strain ATCC 700550 / JCM 31522 / CIP 106686 / LMG 19005 / NCIMB 14063 / MR-1)).